We begin with the raw amino-acid sequence, 570 residues long: Glycine--tRNA ligase (570 aa).

2 residues coordinate substrate: arginine 99 and glutamate 165. ATP-binding positions include arginine 197 to glutamate 199, leucine 207 to phenylalanine 212, glutamate 324 to cysteine 325, and glycine 443 to arginine 446. Substrate is bound at residue phenylalanine 212–glutamate 216. Glutamate 439 to glycine 443 contacts substrate.

The protein belongs to the class-II aminoacyl-tRNA synthetase family.

The protein resides in the cytoplasm. It carries out the reaction tRNA(Gly) + glycine + ATP = glycyl-tRNA(Gly) + AMP + diphosphate. In terms of biological role, catalyzes the attachment of glycine to tRNA(Gly). This is Glycine--tRNA ligase from Thermococcus sibiricus (strain DSM 12597 / MM 739).